A 331-amino-acid chain; its full sequence is Phosphoribosylformylglycinamidine cyclo-ligase (331 aa).

This sequence belongs to the AIR synthase family.

The protein localises to the cytoplasm. The enzyme catalyses 2-formamido-N(1)-(5-O-phospho-beta-D-ribosyl)acetamidine + ATP = 5-amino-1-(5-phospho-beta-D-ribosyl)imidazole + ADP + phosphate + H(+). It functions in the pathway purine metabolism; IMP biosynthesis via de novo pathway; 5-amino-1-(5-phospho-D-ribosyl)imidazole from N(2)-formyl-N(1)-(5-phospho-D-ribosyl)glycinamide: step 2/2. The polypeptide is Phosphoribosylformylglycinamidine cyclo-ligase (Clostridium botulinum (strain Loch Maree / Type A3)).